A 114-amino-acid polypeptide reads, in one-letter code: Secretoglobin family 2B member 2 (114 aa).

An N-terminal signal peptide occupies residues 1-23 (MKGTLLLLALLVTGELGFQRTEA).

It belongs to the secretoglobin family. Expressed in lacrimal gland.

The protein resides in the secreted. The chain is Secretoglobin family 2B member 2 (Scgb2b2) from Mus musculus (Mouse).